The chain runs to 281 residues: Acetyl-coenzyme A carboxylase carboxyl transferase subunit beta (281 aa).

The 258-residue stretch at 24 to 281 folds into the CoA carboxyltransferase N-terminal domain; that stretch reads GLWYKSPKGK…TKLLTMLANN (258 aa).

This sequence belongs to the AccD/PCCB family. In terms of assembly, acetyl-CoA carboxylase is a heterohexamer composed of biotin carboxyl carrier protein (AccB), biotin carboxylase (AccC) and two subunits each of ACCase subunit alpha (AccA) and ACCase subunit beta (AccD).

It is found in the cytoplasm. The enzyme catalyses N(6)-carboxybiotinyl-L-lysyl-[protein] + acetyl-CoA = N(6)-biotinyl-L-lysyl-[protein] + malonyl-CoA. It participates in lipid metabolism; malonyl-CoA biosynthesis; malonyl-CoA from acetyl-CoA: step 1/1. Functionally, component of the acetyl coenzyme A carboxylase (ACC) complex. Biotin carboxylase (BC) catalyzes the carboxylation of biotin on its carrier protein (BCCP) and then the CO(2) group is transferred by the transcarboxylase to acetyl-CoA to form malonyl-CoA. The chain is Acetyl-coenzyme A carboxylase carboxyl transferase subunit beta from Amoebophilus asiaticus (strain 5a2).